The following is a 145-amino-acid chain: Transcription antitermination protein NusB (145 aa).

Belongs to the NusB family.

Involved in transcription antitermination. Required for transcription of ribosomal RNA (rRNA) genes. Binds specifically to the boxA antiterminator sequence of the ribosomal RNA (rrn) operons. This is Transcription antitermination protein NusB from Aromatoleum aromaticum (strain DSM 19018 / LMG 30748 / EbN1) (Azoarcus sp. (strain EbN1)).